The sequence spans 183 residues: Photosystem II extrinsic protein V (183 aa).

The N-terminal stretch at 1 to 31 (MTFGHCRRASTLRSAFVLGLCGLLLAGCSGA) is a signal peptide. Heme c contacts are provided by C84, C87, H88, and C138.

Belongs to the cytochrome c family. PsbV subfamily. As to quaternary structure, PSII is composed of 1 copy each of membrane proteins PsbA, PsbB, PsbC, PsbD, PsbE, PsbF, PsbH, PsbI, PsbJ, PsbK, PsbL, PsbM, PsbT, PsbX, Psb30/Ycf12, peripheral proteins PsbO, CyanoQ (PsbQ), PsbU, PsbV and a large number of cofactors. It forms dimeric complexes. Heme c is required as a cofactor.

It is found in the cell inner membrane. Probably one of the extrinsic, lumenal subunits of photosystem II (PSII). PSII is a light-driven water plastoquinone oxidoreductase, using light energy to abstract electrons from H(2)O, generating a proton gradient subsequently used for ATP formation. The extrinsic proteins stabilize the structure of photosystem II oxygen-evolving complex (OEC), the ion environment of oxygen evolution and protect the OEC against heat-induced inactivation. Low-potential cytochrome c that plays a role in the OEC of PSII. In Gloeobacter violaceus (strain ATCC 29082 / PCC 7421), this protein is Photosystem II extrinsic protein V (psbV1).